The sequence spans 300 residues: Ubiquitin carboxyl-terminal hydrolase 2 (300 aa).

The region spanning 2 to 220 (SWTTIESDAG…IRFNLMVICK (219 aa)) is the UCH catalytic domain. The Nucleophile role is filled by cysteine 83. Histidine 159 functions as the Proton donor in the catalytic mechanism. Residues 261–290 (NFVGLFVELSKLLVKDRIDKNTWNSTLETA) enclose the ULD domain.

It belongs to the peptidase C12 family. Component of the 26S proteasome. Interacts with rpn10.

Its subcellular location is the nucleus. It catalyses the reaction Thiol-dependent hydrolysis of ester, thioester, amide, peptide and isopeptide bonds formed by the C-terminal Gly of ubiquitin (a 76-residue protein attached to proteins as an intracellular targeting signal).. Functionally, ubiquitin-protein hydrolase is involved both in the processing of ubiquitin precursors and of ubiquitinated proteins. This enzyme is a thiol protease that recognizes and hydrolyzes a peptide bond at the C-terminal glycine of ubiquitin. The sequence is that of Ubiquitin carboxyl-terminal hydrolase 2 (uch2) from Schizosaccharomyces pombe (strain 972 / ATCC 24843) (Fission yeast).